The primary structure comprises 73 residues: Sec-independent protein translocase protein TatA (73 aa).

A helical membrane pass occupies residues 1 to 21 (MGSFSIWHWLIVLVIVMLVFG). Residues 44 to 73 (KSAEDPNEQIPQSTTTAEKTVDVQAKDINK) are disordered. Polar residues predominate over residues 52-61 (QIPQSTTTAE). Basic and acidic residues predominate over residues 62 to 73 (KTVDVQAKDINK).

Belongs to the TatA/E family. As to quaternary structure, the Tat system comprises two distinct complexes: a TatABC complex, containing multiple copies of TatA, TatB and TatC subunits, and a separate TatA complex, containing only TatA subunits. Substrates initially bind to the TatABC complex, which probably triggers association of the separate TatA complex to form the active translocon.

Its subcellular location is the cell inner membrane. In terms of biological role, part of the twin-arginine translocation (Tat) system that transports large folded proteins containing a characteristic twin-arginine motif in their signal peptide across membranes. TatA could form the protein-conducting channel of the Tat system. This chain is Sec-independent protein translocase protein TatA, found in Polynucleobacter asymbioticus (strain DSM 18221 / CIP 109841 / QLW-P1DMWA-1) (Polynucleobacter necessarius subsp. asymbioticus).